We begin with the raw amino-acid sequence, 290 residues long: Isopentenyl-diphosphate Delta-isomerase II (290 aa).

The Nudix hydrolase domain maps to 108–260; the sequence is MLHRAFTVFL…GLKLSPWFRL (153 aa). Residues C145 and E207 contribute to the active site.

This sequence belongs to the IPP isomerase type 1 family.

The catalysed reaction is isopentenyl diphosphate = dimethylallyl diphosphate. The protein operates within isoprenoid biosynthesis; dimethylallyl diphosphate biosynthesis; dimethylallyl diphosphate from isopentenyl diphosphate: step 1/1. Its pathway is porphyrin-containing compound metabolism; chlorophyll biosynthesis. Functionally, catalyzes the 1,3-allylic rearrangement of the homoallylic substrate isopentenyl (IPP) to its highly electrophilic allylic isomer, dimethylallyl diphosphate (DMAPP). In Clarkia xantiana (Gunsight clarkia), this protein is Isopentenyl-diphosphate Delta-isomerase II (IPI2).